Here is a 418-residue protein sequence, read N- to C-terminus: UDP-N-acetylglucosamine 1-carboxyvinyltransferase (418 aa).

Lys23 to Asn24 contributes to the phosphoenolpyruvate binding site. Residue Arg93 coordinates UDP-N-acetyl-alpha-D-glucosamine. Asp117 serves as the catalytic Proton donor. UDP-N-acetyl-alpha-D-glucosamine-binding residues include Asp305 and Val327.

This sequence belongs to the EPSP synthase family. MurA subfamily.

It is found in the cytoplasm. It carries out the reaction phosphoenolpyruvate + UDP-N-acetyl-alpha-D-glucosamine = UDP-N-acetyl-3-O-(1-carboxyvinyl)-alpha-D-glucosamine + phosphate. It functions in the pathway cell wall biogenesis; peptidoglycan biosynthesis. Functionally, cell wall formation. Adds enolpyruvyl to UDP-N-acetylglucosamine. This chain is UDP-N-acetylglucosamine 1-carboxyvinyltransferase, found in Mycobacterium leprae (strain TN).